The sequence spans 451 residues: Alpha-galactosidase (451 aa).

5–71 (PKITFIGAGS…ASGRITCHTN (67 aa)) provides a ligand contact to NAD(+). Asn151 is a substrate binding site. Cys173 contributes to the Mn(2+) binding site. His174 serves as the catalytic Proton donor. Position 203 (His203) interacts with Mn(2+). Arg287 contributes to the substrate binding site.

It belongs to the glycosyl hydrolase 4 family. As to quaternary structure, homodimer. Mn(2+) is required as a cofactor. NAD(+) serves as cofactor.

It catalyses the reaction Hydrolysis of terminal, non-reducing alpha-D-galactose residues in alpha-D-galactosides, including galactose oligosaccharides, galactomannans and galactolipids.. In Salmonella typhimurium (strain LT2 / SGSC1412 / ATCC 700720), this protein is Alpha-galactosidase (melA).